The chain runs to 593 residues: Probable serine/threonine-protein kinase samkB (593 aa).

An SAM domain is found at 29–93 (WNNEAVCEWL…SIFKKLKNNN (65 aa)). The disordered stretch occupies residues 108-157 (ESNSINNSNNNNNNNNNNNNNNNNNNNNNNNNNNNNNNNNNNNNNNKIDT). The segment covering 113 to 153 (NNSNNNNNNNNNNNNNNNNNNNNNNNNNNNNNNNNNNNNNN) has biased composition (low complexity). The Protein kinase domain occupies 186–438 (YKLIEEIGRG…SKQLLEAQWF (253 aa)). Residues 192-200 (IGRGAFSIV) and K216 contribute to the ATP site. D313 (proton acceptor) is an active-site residue.

It belongs to the protein kinase superfamily. Ser/Thr protein kinase family.

It carries out the reaction L-seryl-[protein] + ATP = O-phospho-L-seryl-[protein] + ADP + H(+). It catalyses the reaction L-threonyl-[protein] + ATP = O-phospho-L-threonyl-[protein] + ADP + H(+). The polypeptide is Probable serine/threonine-protein kinase samkB (samkB) (Dictyostelium discoideum (Social amoeba)).